We begin with the raw amino-acid sequence, 508 residues long: Aldehyde dehydrogenase (508 aa).

Active-site residues include glutamate 264 and cysteine 303.

The protein belongs to the aldehyde dehydrogenase family.

It catalyses the reaction acetaldehyde + NAD(+) + H2O = acetate + NADH + 2 H(+). It participates in organosulfur degradation. In terms of biological role, catalyzes the NAD(+)-dependent oxidation of acetaldehyde to acetate. The polypeptide is Aldehyde dehydrogenase (Paracoccus denitrificans (strain Pd 1222)).